The chain runs to 78 residues: Translation initiation factor IF-1, plastid (78 aa).

The 72-residue stretch at 1 to 72 (MKKQDLIDME…TKGRITYRLR (72 aa)) folds into the S1-like domain.

Belongs to the IF-1 family. Component of the 30S ribosomal translation pre-initiation complex which assembles on the 30S ribosome in the order IF-2 and IF-3, IF-1 and N-formylmethionyl-tRNA(fMet); mRNA recruitment can occur at any time during PIC assembly.

The protein resides in the plastid. One of the essential components for the initiation of protein synthesis. Stabilizes the binding of IF-2 and IF-3 on the 30S subunit to which N-formylmethionyl-tRNA(fMet) subsequently binds. Helps modulate mRNA selection, yielding the 30S pre-initiation complex (PIC). Upon addition of the 50S ribosomal subunit IF-1, IF-2 and IF-3 are released leaving the mature 70S translation initiation complex. The chain is Translation initiation factor IF-1, plastid from Aneura mirabilis (Parasitic liverwort).